A 137-amino-acid polypeptide reads, in one-letter code: ATP synthase epsilon chain, chloroplastic (137 aa).

This sequence belongs to the ATPase epsilon chain family. As to quaternary structure, F-type ATPases have 2 components, CF(1) - the catalytic core - and CF(0) - the membrane proton channel. CF(1) has five subunits: alpha(3), beta(3), gamma(1), delta(1), epsilon(1). CF(0) has three main subunits: a, b and c.

The protein resides in the plastid. It localises to the chloroplast thylakoid membrane. Functionally, produces ATP from ADP in the presence of a proton gradient across the membrane. This chain is ATP synthase epsilon chain, chloroplastic, found in Oryza nivara (Indian wild rice).